Reading from the N-terminus, the 407-residue chain is Zinc finger protein 260 (407 aa).

Positions 1–21 (MLESLQPESELLHDEPDPGEK) are disordered. The segment covering 10 to 21 (ELLHDEPDPGEK) has biased composition (basic and acidic residues). The segment at 23–45 (YECDECRKTFSLEQHFVEHKKTH) adopts a C2H2-type 1 zinc-finger fold. The C2H2-type 2; degenerate zinc finger occupies 51–73 (PECTGCGEEFSKASSLTRHLRSR). 11 C2H2-type zinc fingers span residues 79–101 (YKCG…QKQH), 131–153 (YACK…EKIH), 159–181 (FECN…QNVH), 187–209 (FKCN…QRIH), 215–237 (YECK…QRSH), 243–265 (YTCK…EKIH), 271–293 (YKCN…HNIH), 299–321 (YECN…VRIH), 327–349 (YECK…MRSH), 355–377 (YGCN…MRIH), and 383–405 (YQCS…QRIH).

This sequence belongs to the krueppel C2H2-type zinc-finger protein family. As to quaternary structure, binds DNA. Interacts with GATA4. Expressed in both embryonic, fetal and adult heart. Also expressed in lung, skeletal muscle and adrenal glands.

The protein resides in the nucleus. Functionally, transcription factor that acts as a cardiac regulator and an effector of alpha1-adrenergic signaling. Binds to PE response elements (PERE) present in the promoter of genes such as ANF/NPPA and acts as a direct transcriptional activator of NPPA. Also acts as a cofactor with GATA4, a key cardiac regulator. The polypeptide is Zinc finger protein 260 (Znf260) (Rattus norvegicus (Rat)).